Consider the following 177-residue polypeptide: Bifunctional protein PyrR (177 aa).

The PRPP-binding signature appears at 99–111 (VVLVDDVLYTGRT).

The protein belongs to the purine/pyrimidine phosphoribosyltransferase family. PyrR subfamily. As to quaternary structure, homodimer and homohexamer; in equilibrium.

It carries out the reaction UMP + diphosphate = 5-phospho-alpha-D-ribose 1-diphosphate + uracil. Its function is as follows. Regulates transcriptional attenuation of the pyrimidine nucleotide (pyr) operon by binding in a uridine-dependent manner to specific sites on pyr mRNA. This disrupts an antiterminator hairpin in the RNA and favors formation of a downstream transcription terminator, leading to a reduced expression of downstream genes. Functionally, also displays a weak uracil phosphoribosyltransferase activity which is not physiologically significant. The protein is Bifunctional protein PyrR of Clostridioides difficile (strain 630) (Peptoclostridium difficile).